Here is a 365-residue protein sequence, read N- to C-terminus: Peptide chain release factor 2 (365 aa).

The residue at position 252 (Gln-252) is an N5-methylglutamine.

The protein belongs to the prokaryotic/mitochondrial release factor family. Post-translationally, methylated by PrmC. Methylation increases the termination efficiency of RF2.

Its subcellular location is the cytoplasm. Its function is as follows. Peptide chain release factor 2 directs the termination of translation in response to the peptide chain termination codons UGA and UAA. This chain is Peptide chain release factor 2, found in Escherichia coli (strain K12 / MC4100 / BW2952).